The primary structure comprises 3014 residues: Genome polyprotein (3014 aa).

The residue at position 2 (S2) is an N-acetylserine; by host. The interaction with STAT1 stretch occupies residues 2–23 (STNPKPQRKTKRNTNRRPQDVK). Residues 2 to 58 (STNPKPQRKTKRNTNRRPQDVKFPGGGQIVGGVYLLPRRGPRLGVRATRKTSERSQP) are interaction with EIF2AK2/PKR. The segment at 2-59 (STNPKPQRKTKRNTNRRPQDVKFPGGGQIVGGVYLLPRRGPRLGVRATRKTSERSQPR) is interaction with DDX3X. Positions 2 to 75 (STNPKPQRKT…PKARQPTGRS (74 aa)) are disordered. Over 2 to 168 (STNPKPQRKT…EDGVNYATGN (167 aa)) the chain is Cytoplasmic. Short sequence motifs (nuclear localization signal) lie at residues 5 to 13 (PKPQRKTKR) and 38 to 43 (PRRGPR). The span at 7 to 16 (PQRKTKRNTN) shows a compositional bias: basic residues. Residues 32-47 (GGVYLLPRRGPRLGVR) show a composition bias toward low complexity. At S53 the chain carries Phosphoserine; by host. 2 consecutive short sequence motifs (nuclear localization signal) follow at residues 58–64 (PRGRRQP) and 66–71 (PKARQP). 2 positions are modified to phosphoserine; by host: S99 and S116. The interval 112 to 152 (PRRKSRNLGKVIDTLTCGFADLMGYIPLVGGPVGGVARALA) is important for endoplasmic reticulum and mitochondrial localization. Residues 122–173 (VIDTLTCGFADLMGYIPLVGGPVGGVARALAHGVRVLEDGVNYATGNLPGCS) are interaction with APOA2. The important for lipid droplets localization stretch occupies residues 164 to 167 (YATG). A helical transmembrane segment spans residues 169 to 189 (LPGCSFSIFILALLSCLTVPT). The propeptide at 178–191 (ILALLSCLTVPTSA) is ER anchor for the core protein, removed in mature form by host signal peptidase. Topologically, residues 190–358 (SAVPYRNASG…AGAHWGVLFA (169 aa)) are lumenal. 3 N-linked (GlcNAc...) asparagine; by host glycosylation sites follow: N196, N209, and N234. The segment at 265–296 (LAGGAALCSALYVGDACGAVFLVGQMFTYSPR) is important for fusion. N-linked (GlcNAc...) asparagine; by host glycosylation occurs at N305. A helical membrane pass occupies residues 359 to 379 (AAYYASAANWAKVVLVLFLFA). Residues 380–726 (GVDANTRTVG…WEYIVLAFLL (347 aa)) are Lumenal-facing. Residues 385 to 412 (TRTVGGSAAQGARGLASLFTPGPQQNLQ) form an HVR1 region. N417, N423, and N430 each carry an N-linked (GlcNAc...) (high mannose) asparagine; by host glycan. 4 disulfide bridges follow: C429–C553, C452–C459, C487–C495, and C504–C509. N448 is a glycosylation site (N-linked (GlcNAc...) asparagine; by host). Residues 475–479 (AAVSG) form an HVR2 region. The segment at 481-494 (SDDKPYCWHYPPRP) is CD81-binding 1. An N-linked (GlcNAc...) asparagine; by host glycan is attached at N533. The CD81-binding 2 stretch occupies residues 545–552 (PPTGNWFG). The N-linked (GlcNAc...) asparagine; by host glycan is linked to N557. The cysteines at positions 565 and 570 are disulfide-linked. A glycan (N-linked (GlcNAc...) asparagine; by host) is linked at N578. Intrachain disulfides connect C582/C586, C598/C621, and C608/C645. 2 N-linked (GlcNAc...) (high mannose) asparagine; by host glycosylation sites follow: N624 and N646. The cysteines at positions 653 and 678 are disulfide-linked. A PKR/eIF2-alpha phosphorylation homology domain (PePHD) region spans residues 661 to 672 (AELSPLLHTTTQ). A helical membrane pass occupies residues 727–747 (LADARICTCLWIMLLVCQAEA). The Lumenal portion of the chain corresponds to 748–758 (ALENVIVLNAA). Residues 759 to 779 (AAAGTHGFFWGLLVICFAWHF) traverse the membrane as a helical segment. Residues 780-783 (KGRL) are Cytoplasmic-facing. Residues 784-804 (VPGATYLCLGIWPLLLLLFLL) traverse the membrane as a helical segment. Over 805–814 (PQRALALDSS) the chain is Lumenal. A helical membrane pass occupies residues 815–835 (DGGTVGCLVLTILTIFTLTPG). Residues 836 to 882 (YKKMVVLVIWWLQYFIARVEAFIHVWVPPLQVRGGRDAIIMLTCLFH) are Cytoplasmic-facing. Residues 883 to 903 (PALGFEVTKILLGILGPLYLL) traverse the membrane as a helical segment. Residues 904–929 (QYSLIKLPYFIRARALLRACLLAKHL) are Lumenal-facing. Residues 904–1027 (QYSLIKLPYF…DIREAGWRLL (124 aa)) form the Peptidase C18 domain. The segment at 905 to 1207 (YSLIKLPYFI…PVENLETTMR (303 aa)) is protease NS2-3. A lipid anchor (S-palmitoyl cysteine; by host) is attached at C923. A helical transmembrane segment spans residues 930–950 (ACGRYVQAALLHLGRLTGTYI). An interaction with host SCPS1 region spans residues 930–950 (ACGRYVQAALLHLGRLTGTYI). Residues 951–1658 (YDHLAPMKDW…CMSADLEVIT (708 aa)) lie on the Cytoplasmic side of the membrane. Catalysis depends on for protease NS2 activity; shared with dimeric partner residues H953, E973, and C994. Residues 1028–1209 (APITAYAQQT…ENLETTMRSP (182 aa)) form the Peptidase S29 domain. Residues H1084 and D1108 each act as charge relay system; for serine protease NS3 activity in the active site. Zn(2+)-binding residues include C1124 and C1126. S1166 (charge relay system; for serine protease NS3 activity) is an active-site residue. C1172 and H1176 together coordinate Zn(2+). Residues 1218 to 1370 (PAVPHEFQVG…PNIEEVALPS (153 aa)) form the Helicase ATP-binding domain. 1231 to 1238 (APTGSGKS) is a binding site for ATP. Mg(2+)-binding residues include S1238 and E1318. Positions 1317-1320 (DECH) match the DECH box motif. Positions 1487 to 1499 (QRRGRTGRGRHGI) are RNA-binding. The chain crosses the membrane as a helical span at residues 1659-1679 (STWVLVGGVVAALAAYCLTVG). An NS3-binding region spans residues 1680–1691 (SVAIVGRIILSG). Residues 1680 to 1806 (SVAIVGRIIL…AVTSPLTTQQ (127 aa)) lie on the Cytoplasmic side of the membrane. A helical transmembrane segment spans residues 1807 to 1827 (TLLFNILGGWVASQIAPPTAA). Residues 1828–1829 (TA) are Lumenal-facing. The helical transmembrane segment at 1830–1850 (FVVSGMAGAAVGSIGLGRVLI) threads the bilayer. A topological domain (cytoplasmic) is located at residue D1851. A helical membrane pass occupies residues 1852-1872 (ILAGYGAGVAGALVAFKIMCG). Residues 1873–1882 (EKPTAEDLVN) lie on the Lumenal side of the membrane. A helical membrane pass occupies residues 1883 to 1903 (LLPSILCPGALVVGVICAAVL). The Cytoplasmic portion of the chain corresponds to 1904 to 1973 (RRHIGPGEGA…WIGEDYSTPC (70 aa)). A lipid anchor (S-palmitoyl cysteine; by host) is attached at C1973. The stretch at 1974 to 2003 (DGTWLRAIWDWVCTALTDFKAWLQAKLLPQ) is an intramembrane region. The Cytoplasmic segment spans residues 2004 to 2993 (LPGVPFLSCQ…YHSMSRARPR (990 aa)). Zn(2+)-binding residues include C2012, C2030, C2032, and C2053. The FKBP8-binding stretch occupies residues 2121 to 2209 (EFFTELDGVR…ASSSASQLSA (89 aa)). The tract at residues 2121–2334 (EFFTELDGVR…VPPPRRKRKP (214 aa)) is transcriptional activation. The segment at 2136–2140 (PPCNP) is interaction with non-structural protein 4A. Disordered regions lie at residues 2187 to 2219 (AKRRLDRGSPPSLASSSASQLSAPSLKATCTTQ), 2301 to 2337 (TWKQPDYDPPQVSGCPLPPAGLPPVPPPRRKRKPVVL), and 2358 to 2413 (TQSI…SWST). The interval 2190–2441 (RLDRGSPPSL…ALITPCSAEE (252 aa)) is interaction with host SKP2. Phosphoserine; by host occurs at positions 2195, 2198, 2202, 2205, 2208, and 2211. The span at 2195–2212 (SPPSLASSSASQLSAPSL) shows a compositional bias: low complexity. Residues 2211–2250 (SLKATCTTQGHHPDADLIEANLLWRQCMGGNITRVEAENK) are ISDR. The interval 2211 to 2276 (SLKATCTTQG…REISVSADCF (66 aa)) is interaction with EIF2AK2/PKR. The segment at 2250–2307 (KVVILDSFEPLKADDDDREISVSADCFRRGPAFPPALPIWARPGYDPPLLETWKQPDY) is NS4B-binding. A V3 region spans residues 2300–2378 (ETWKQPDYDP…GTSSQPDSGP (79 aa)). The span at 2316-2327 (PLPPAGLPPVPP) shows a compositional bias: pro residues. The short motif at 2323 to 2326 (PPVP) is the SH3-binding element. The Nuclear localization signal signature appears at 2328–2337 (PRRKRKPVVL). Over residues 2358 to 2375 (TQSIEGQDSAVGTSSQPD) the composition is skewed to polar residues. S2465 is modified (phosphoserine; by host). The region spanning 2637–2755 (PMAFSYDTRC…ICESQGTHED (119 aa)) is the RdRp catalytic domain. Positions 2643, 2741, and 2742 each coordinate Mg(2+). The helical transmembrane segment at 2994-3014 (CILLCLLLLTVGVGIFLLPAR) threads the bilayer.

It belongs to the hepacivirus polyprotein family. As to quaternary structure, homooligomer. Interacts with E1 (via C-terminus). Interacts with the non-structural protein 5A. Interacts (via N-terminus) with host STAT1 (via SH2 domain); this interaction results in decreased STAT1 phosphorylation and ubiquitin-mediated proteasome-dependent STAT1 degradation, leading to decreased IFN-stimulated gene transcription. Interacts with host STAT3; this interaction constitutively activates STAT3. Interacts with host LTBR receptor. Interacts with host TNFRSF1A receptor and possibly induces apoptosis. Interacts with host HNRPK. Interacts with host YWHAE. Interacts with host UBE3A/E6AP. Interacts with host DDX3X. Interacts with host APOA2. Interacts with host RXRA protein. Interacts with host SP110 isoform 3/Sp110b; this interaction sequesters the transcriptional corepressor SP110 away from the nucleus. Interacts with host CREB3 nuclear transcription protein; this interaction triggers cell transformation. Interacts with host ACY3. Interacts with host C1QR1. Interacts with host RBM24; this interaction, which enhances the interaction of the mature core protein with 5'-UTR, may inhibit viral translation and favor replication. Interacts with host EIF2AK2/PKR; this interaction induces the autophosphorylation of EIF2AK2. Part of the viral assembly initiation complex composed of NS2, E1, E2, NS3, NS4A, NS5A and the mature core protein. Forms a heterodimer with envelope glycoprotein E2. Interacts with mature core protein. Interacts with protease NS2. The heterodimer E1/E2 interacts with host CLDN1; this interaction plays a role in viral entry into host cell. Interacts with host SPSB2 (via C-terminus). Part of the viral assembly initiation complex composed of NS2, E1, E2, NS3, NS4A, NS5A and the mature core protein. Interacts with host NEURL3; this interaction prevents E1 binding to glycoprotein E2. In terms of assembly, forms a heterodimer with envelope glycoprotein E1. Interacts with host CD81 and SCARB1 receptors; these interactions play a role in viral entry into host cell. Interacts with host EIF2AK2/PKR; this interaction inhibits EIF2AK2 and probably allows the virus to evade the innate immune response. Interacts with host CD209/DC-SIGN and CLEC4M/DC-SIGNR. Interact with host SPCS1; this interaction is essential for viral particle assembly. Interacts with protease NS2. The heterodimer E1/E2 interacts with host CLDN1; this interaction plays a role in viral entry into host cell. Part of the viral assembly initiation complex composed of NS2, E1, E2, NS3, NS4A, NS5A and the mature core protein. Interacts with host SLC3A2/4F2hc; the interaction may facilitate viral entry into host cell. Interacts with human PLSCR1. As to quaternary structure, homohexamer. Homoheptamer. Interacts with protease NS2. Homodimer. Interacts with host SPCS1; this interaction is essential for viral particle assembly. Interacts with envelope glycoprotein E1. Interacts with envelope glycoprotein E2. Interacts with viroporin p7. Interacts with serine protease/helicase NS3. Part of the replication complex composed of NS2, NS3, NS4A, NS4B, NS5A and the RNA-directed RNA polymerase embedded in an ER-derived membranous web. Part of the viral assembly initiation complex composed of NS2, E1, E2, NS3, NS4A, NS5A and the mature core protein. In terms of assembly, interacts with protease NS2. Interacts with non-structural protein 4A; this interaction stabilizes the folding of NS3 serine protease. NS3-NS4A interaction is essential for NS3 activation and allows membrane anchorage of the latter. NS3/NS4A complex also prevents phosphorylation of host IRF3, thus preventing the establishment of dsRNA induced antiviral state. Interacts with host MAVS; this interaction leads to the cleavage and inhibition of host MAVS. Interacts with host TICAM1; this interaction leads to the cleavage and inhibition of host TICAM1. Interacts with host TANK-binding kinase/TBK1; this interaction results in the inhibition of the association between TBK1 and IRF3, which leads to the inhibition of IRF3 activation. Interacts with host RBM24. Part of the replication complex composed of NS2, NS3, NS4A, NS4B, NS5A and the RNA-directed RNA polymerase embedded in an ER-derived membranous web. Part of the viral assembly initiation complex composed of NS2, E1, E2, NS3, NS4A, NS5A and the mature core protein. As to quaternary structure, interacts with NS3 serine protease; this interaction stabilizes the folding of NS3 serine protease. NS3-NS4A interaction is essential for NS3 activation and allows membrane anchorage of the latter. Interacts with non-structural protein 5A (via N-terminus). Part of the replication complex composed of NS2, NS3, NS4A, NS4B, NS5A and the RNA-directed RNA polymerase embedded in an ER-derived membranous web. Part of the viral assembly initiation complex composed of NS2, E1, E2, NS3, NS4A, NS5A and the mature core protein. Homomultimer. Interacts with non-structural protein NS5A. Interacts with host PLA2G4C; this interaction likely initiates the recruitment of replication complexes to lipid droplets. Interacts with host STING; this interaction disrupts the interaction between STING and TBK1 thereby suppressing the interferon signaling. Part of the replication complex composed of NS2, NS3, NS4A, NS4B, NS5A and the RNA-directed RNA polymerase embedded in an ER-derived membranous web. In terms of assembly, monomer. Homodimer; dimerization is required for RNA-binding. Interacts with the mature core protein. Interacts (via N-terminus) with non-structural protein 4A. Interacts with non-structural protein 4B. Interacts (via region D2) with RNA-directed RNA polymerase. Part of the viral assembly initiation complex composed of NS2, E1, E2, NS3, NS4A, NS5A and the mature core protein. Part of the replication complex composed of NS2, NS3, NS4A, NS4B, NS5A and the RNA-directed RNA polymerase embedded in an ER-derived membranous web. Interacts with host GRB2. Interacts with host BIN1. Interacts with host PIK3R1. Interacts with host SRCAP. Interacts with host FKBP8. Interacts (via C-terminus) with host VAPB (via MSP domain). Interacts with host EIF2AK2/PKR; this interaction leads to disruption of EIF2AK2 dimerization by NS5A and probably allows the virus to evade the innate immune response. Interacts (via N-terminus) with host PACSIN2 (via N-terminus); this interaction attenuates protein kinase C alpha-mediated phosphorylation of PACSIN2 by disrupting the interaction between PACSIN2 and PRKCA. Interacts (via N-terminus) with host SRC kinase (via SH2 domain). Interacts with most Src-family kinases. Interacts with host IFI27 and SKP2; promotes the ubiquitin-mediated proteasomal degradation of NS5A. Interacts with host GPS2. Interacts with host TNFRSF21; this interaction allows the modulation by the virus of JNK, p38 MAPK, STAT3, and Akt signaling pathways in a DR6-dependent manner. Interacts (via N-terminus) with host CIDEB (via N-terminus); this interaction seems to regulate the association of HCV particles with APOE. Interacts with host CHKA/Choline Kinase-alpha; CHKA bridges host PI4KA and NS5A and potentiates NS5A-stimulated PI4KA activity, which then facilitates the targeting of the ternary complex to the ER for viral replication. Interacts with host SPSB2 (via C-terminus); this interaction targets NS5A for ubiquitination and degradation. Interacts with host RAB18; this interaction may promote the association of NS5A and other replicase components with lipid droplets. Interacts (via region D2) with host PPIA/CYPA; the interaction stimulates RNA-binding ability of NS5A and is dependent on the peptidyl-prolyl cis-trans isomerase activity of PPIA/CYPA. Interacts with host TRIM14; this interaction induces the degradation of NS5A. As to quaternary structure, homooligomer. Interacts with non-structural protein 5A. Interacts with host VAPB. Interacts with host PRK2/PKN2. Interacts with host HNRNPA1 and SEPT6; these interactions facilitate viral replication. Part of the replication complex composed of NS2, NS3, NS4A, NS4B, NS5A and the RNA-directed RNA polymerase. Zn(2+) serves as cofactor. Requires Mg(2+) as cofactor. In terms of processing, specific enzymatic cleavages in vivo yield mature proteins. The structural proteins, core, E1, E2 and p7 are produced by proteolytic processing by host signal peptidases. The core protein precursor is synthesized as a 23 kDa, which is retained in the ER membrane through the hydrophobic signal peptide. Cleavage by the signal peptidase releases the 21 kDa mature core protein. The cleavage of the core protein precursor occurs between aminoacids 176 and 188 but the exact cleavage site is not known. Some degraded forms of the core protein appear as well during the course of infection. The other proteins (p7, NS2, NS3, NS4A, NS4B, NS5A and NS5B) are cleaved by the viral proteases. Autoprocessing between NS2 and NS3 is mediated by the NS2 cysteine protease catalytic domain and regulated by the NS3 N-terminal domain. Phosphorylated by host PKC and PKA. Post-translationally, ubiquitinated; mediated by UBE3A and leading to core protein subsequent proteasomal degradation. In terms of processing, highly N-glycosylated. Palmitoylation is required for NS2/3 autoprocessing and E2 recruitment to membranes. Post-translationally, palmitoylated. This modification may play a role in its polymerization or in protein-protein interactions. In terms of processing, phosphorylated on serines in a basal form termed p56. p58 is a hyperphosphorylated form of p56. p56 and p58 coexist in the cell in roughly equivalent amounts. Hyperphosphorylation is dependent on the presence of NS4A. Host CSNK1A1/CKI-alpha or RPS6KB1 kinases may be responsible for NS5A phosphorylation. Tyrosine phosphorylation is essential for the interaction with host SRC. Post-translationally, the N-terminus is phosphorylated by host PRK2/PKN2.

It localises to the host endoplasmic reticulum membrane. The protein resides in the host mitochondrion membrane. It is found in the virion. The protein localises to the host cytoplasm. Its subcellular location is the host nucleus. It localises to the host lipid droplet. The protein resides in the virion membrane. It is found in the host mitochondrion. The protein localises to the host cell membrane. Its subcellular location is the host perinuclear region. The enzyme catalyses Hydrolysis of four peptide bonds in the viral precursor polyprotein, commonly with Asp or Glu in the P6 position, Cys or Thr in P1 and Ser or Ala in P1'.. It catalyses the reaction a ribonucleoside 5'-triphosphate + H2O = a ribonucleoside 5'-diphosphate + phosphate + H(+). It carries out the reaction ATP + H2O = ADP + phosphate + H(+). The catalysed reaction is RNA(n) + a ribonucleoside 5'-triphosphate = RNA(n+1) + diphosphate. Its activity is regulated as follows. Inhibited by the antiviral drug hexamethylene amiloride. Inhibition by amantadine appears to be genotype-dependent. Also inhibited by long-alkyl-chain iminosugar derivatives. With respect to regulation, activity is up-regulated by PRK2/PKN2-mediated phosphorylation. Its function is as follows. Packages viral RNA to form a viral nucleocapsid, and promotes virion budding. Participates in the viral particle production as a result of its interaction with the non-structural protein 5A. Binds RNA and may function as a RNA chaperone to induce the RNA structural rearrangements taking place during virus replication. Modulates viral translation initiation by interacting with viral IRES and 40S ribosomal subunit. Affects various cell signaling pathways, host immunity and lipid metabolism. Prevents the establishment of cellular antiviral state by blocking the interferon-alpha/beta (IFN-alpha/beta) and IFN-gamma signaling pathways and by blocking the formation of phosphorylated STAT1 and promoting ubiquitin-mediated proteasome-dependent degradation of STAT1. Activates STAT3 leading to cellular transformation. Regulates the activity of cellular genes, including c-myc and c-fos. May repress the promoter of p53, and sequester CREB3 and SP110 isoform 3/Sp110b in the cytoplasm. Represses cell cycle negative regulating factor CDKN1A, thereby interrupting an important check point of normal cell cycle regulation. Targets transcription factors involved in the regulation of inflammatory responses and in the immune response: suppresses TNF-induced NF-kappa-B activation, and activates AP-1. Binds to dendritic cells (DCs) via C1QR1, resulting in down-regulation of T-lymphocytes proliferation. Alters lipid metabolism by interacting with hepatocellular proteins involved in lipid accumulation and storage. Induces up-regulation of FAS promoter activity, and thereby contributes to the increased triglyceride accumulation in hepatocytes (steatosis). Functionally, forms a heterodimer with envelope glycoprotein E2, which mediates virus attachment to the host cell, virion internalization through clathrin-dependent endocytosis and fusion with host membrane. Fusion with the host cell is most likely mediated by both E1 and E2, through conformational rearrangements of the heterodimer required for fusion rather than a classical class II fusion mechanism. E1/E2 heterodimer binds host apolipoproteins such as APOB and ApoE thereby forming a lipo-viro-particle (LVP). APOE associated to the LVP allows the initial virus attachment to cell surface receptors such as the heparan sulfate proteoglycans (HSPGs), syndecan-1 (SDC1), syndecan-1 (SDC2), the low-density lipoprotein receptor (LDLR) and scavenger receptor class B type I (SCARB1). The cholesterol transfer activity of SCARB1 allows E2 exposure and binding of E2 to SCARB1 and the tetraspanin CD81. E1/E2 heterodimer binding on CD81 activates the epithelial growth factor receptor (EGFR) signaling pathway. Diffusion of the complex E1-E2-EGFR-SCARB1-CD81 to the cell lateral membrane allows further interaction with Claudin 1 (CLDN1) and occludin (OCLN) to finally trigger HCV entry. Forms a heterodimer with envelope glycoprotein E1, which mediates virus attachment to the host cell, virion internalization through clathrin-dependent endocytosis and fusion with host membrane. Fusion with the host cell is most likely mediated by both E1 and E2, through conformational rearrangements of the heterodimer required for fusion rather than a classical class II fusion mechanism. The interaction between envelope glycoprotein E2 and host apolipoprotein E/APOE allows the proper assembly, maturation and infectivity of the viral particles. This interaction is probably promoted via the up-regulation of cellular autophagy by the virus. E1/E2 heterodimer binds host apolipoproteins such as APOB and APOE thereby forming a lipo-viro-particle (LVP). APOE associated to the LVP allows the initial virus attachment to cell surface receptors such as the heparan sulfate proteoglycans (HSPGs), syndecan-1 (SDC1), syndecan-1 (SDC2), the low-density lipoprotein receptor (LDLR) and scavenger receptor class B type I (SCARB1). The cholesterol transfer activity of SCARB1 allows E2 exposure and binding of E2 to SCARB1 and the tetraspanin CD81. E1/E2 heterodimer binding on CD81 activates the epithelial growth factor receptor (EGFR) signaling pathway. Diffusion of the complex E1-E2-EGFR-SCARB1-CD81 to the cell lateral membrane allows further interaction with Claudin 1 (CLDN1) and occludin (OCLN) to finally trigger HCV entry. Inhibits host EIF2AK2/PKR activation, preventing the establishment of an antiviral state. Viral ligand for CD209/DC-SIGN and CLEC4M/DC-SIGNR, which are respectively found on dendritic cells (DCs), and on liver sinusoidal endothelial cells and macrophage-like cells of lymph node sinuses. These interactions allow the capture of circulating HCV particles by these cells and subsequent facilitated transmission to permissive cells such as hepatocytes and lymphocyte subpopulations. The interaction between E2 and host amino acid transporter complex formed by SLC3A2 and SLC7A5/LAT1 may facilitate viral entry into host cell. In terms of biological role, ion channel protein that acts as a viroporin and plays an essential role in the assembly, envelopment and secretion of viral particles. Regulates the host cell secretory pathway, which induces the intracellular retention of viral glycoproteins and favors assembly of viral particles. Creates a pore in acidic organelles and releases Ca(2+) and H(+) in the cytoplasm of infected cells, leading to a productive viral infection. High levels of cytoplasmic Ca(2+) may trigger membrane trafficking and transport of viral ER-associated proteins to viroplasms, sites of viral genome replication. This ionic imbalance induces the assembly of the inflammasome complex, which triggers the maturation of pro-IL-1beta into IL-1beta through the action of caspase-1. Targets also host mitochondria and induces mitochondrial depolarization. In addition of its role as a viroporin, acts as a lipid raft adhesion factor. Its function is as follows. Cysteine protease required for the proteolytic auto-cleavage between the non-structural proteins NS2 and NS3. The N-terminus of NS3 is required for the function of NS2 protease (active region NS2-3). Promotes the initiation of viral particle assembly by mediating the interaction between structural and non-structural proteins. Functionally, displays three enzymatic activities: serine protease with a chymotrypsin-like fold, NTPase and RNA helicase. NS3 serine protease, in association with NS4A, is responsible for the cleavages of NS3-NS4A, NS4A-NS4B, NS4B-NS5A and NS5A-NS5B. The NS3/NS4A complex prevents phosphorylation of host IRF3, thus preventing the establishment of dsRNA induced antiviral state. The NS3/NS4A complex induces host amino acid transporter component SLC3A2, thus contributing to HCV propagation. NS3 RNA helicase binds to RNA and unwinds both dsDNA and dsRNA in the 3' to 5' direction, and likely resolves RNA complicated stable secondary structures in the template strand. Binds a single ATP and catalyzes the unzipping of a single base pair of dsRNA. Inhibits host antiviral proteins TBK1 and IRF3 thereby preventing the establishment of an antiviral state. Cleaves host MAVS/CARDIF thereby preventing the establishment of an antiviral state. Cleaves host TICAM1/TRIF, thereby disrupting TLR3 signaling and preventing the establishment of an antiviral state. Peptide cofactor which forms a non-covalent complex with the N-terminal of NS3 serine protease. The NS3/NS4A complex prevents phosphorylation of host IRF3, thus preventing the establishment of dsRNA induced antiviral state. The NS3/NS4A complex induces host amino acid transporter component SLC3A2, thus contributing to HCV propagation. In terms of biological role, induces a specific membrane alteration that serves as a scaffold for the virus replication complex. This membrane alteration gives rise to the so-called ER-derived membranous web that contains the replication complex. NS4B self-interaction contributes to its function in membranous web formation. Promotes host TRIF protein degradation in a CASP8-dependent manner thereby inhibiting host TLR3-mediated interferon signaling. Disrupts the interaction between STING and TBK1 contributing to the inhibition of interferon signaling. Its function is as follows. Phosphorylated protein that is indispensable for viral replication and assembly. Both hypo- and hyperphosphorylated states are required for the viral life cycle. The hyperphosphorylated form of NS5A is an inhibitor of viral replication. Involved in RNA-binding and especially in binding to the viral genome. Zinc is essential for RNA-binding. Participates in the viral particle production as a result of its interaction with the mature viral core protein. Its interaction with host VAPB may target the viral replication complex to vesicles. Down-regulates viral IRES translation initiation. Mediates interferon resistance, presumably by interacting with and inhibiting host EIF2AK2/PKR. Prevents BIN1-induced apoptosis. Acts as a transcriptional activator of some host genes important for viral replication when localized in the nucleus. Via the interaction with host PACSIN2, modulates lipid droplet formation in order to promote virion assembly. Modulates TNFRSF21/DR6 signaling pathway for viral propagation. Functionally, RNA-dependent RNA polymerase that performs primer-template recognition and RNA synthesis during viral replication. Initiates RNA transcription/replication at a flavin adenine dinucleotide (FAD), resulting in a 5'- FAD cap on viral RNAs. In this way, recognition of viral 5' RNA by host pattern recognition receptors can be bypassed, thereby evading activation of antiviral pathways. The chain is Genome polyprotein from Hepatitis C virus genotype 5a (isolate SA13) (HCV).